We begin with the raw amino-acid sequence, 83 residues long: Conotoxin Im22.1 (83 aa).

An N-terminal signal peptide occupies residues 1-18; the sequence is MMMRVFIAMFFLLALVEA. Residues 19–26 constitute a propeptide that is removed on maturation; the sequence is GWPRLYDK.

This sequence belongs to the conotoxin E superfamily. In terms of processing, contain 4 disulfide bonds. As to expression, expressed by the venom duct.

It is found in the secreted. Functionally, probable neurotoxin. The polypeptide is Conotoxin Im22.1 (Conus imperialis (Imperial cone)).